We begin with the raw amino-acid sequence, 446 residues long: Divalent metal cation transporter MntH (446 aa).

11 consecutive transmembrane segments (helical) span residues 32 to 52 (FSFL…GNWI), 59 to 79 (AQFG…AMLL), 107 to 127 (AFVF…AEVI), 139 to 159 (IPLL…LFIM), 168 to 188 (AIVG…VFIA), 210 to 230 (GALF…NLYL), 264 to 284 (SIAF…FFGV), 303 to 323 (PLLG…ALLA), 355 to 375 (LITR…FNSN), 381 to 401 (QLLV…LIPL), and 420 to 440 (VNII…YLII).

Belongs to the NRAMP family.

Its subcellular location is the cell membrane. Functionally, h(+)-stimulated, divalent metal cation uptake system. In Staphylococcus saprophyticus subsp. saprophyticus (strain ATCC 15305 / DSM 20229 / NCIMB 8711 / NCTC 7292 / S-41), this protein is Divalent metal cation transporter MntH.